The following is a 287-amino-acid chain: Cyclopropane mycolic acid synthase 3 (287 aa).

Residues 33–34, 68–76, 94–99, and 123–124 each bind S-adenosyl-L-methionine; these read YS, LLDIGCGWG, TLSENQ, and WE. C269 is an active-site residue.

This sequence belongs to the CFA/CMAS family. As to quaternary structure, homodimer.

It is found in the cytoplasm. The catalysed reaction is a 1-acyl-2-(9Z)-enoyl-sn-glycero-3-phospholipid + S-adenosyl-L-methionine = a 1-acyl-2-(9-cyclopronane)-acyl-sn-glycero-3-phospholipid + S-adenosyl-L-homocysteine + H(+). The protein operates within lipid metabolism; mycolic acid biosynthesis. Its function is as follows. Involved in the phagosome maturation block (PMB). Catalyzes the conversion of a double bond to a cyclopropane ring at the proximal position of an alpha mycolic acid via the transfer of a methylene group from S-adenosyl-L-methionine. It can use cis, cis 11,14-eicosadienoic acid and linoelaidic acid as substrate. Cyclopropanated mycolic acids are key factors participating in cell envelope permeability, host immunomodulation and persistence. This Mycobacterium tuberculosis (strain CDC 1551 / Oshkosh) protein is Cyclopropane mycolic acid synthase 3 (pcaA).